Consider the following 292-residue polypeptide: NAD kinase (292 aa).

Asp73 (proton acceptor) is an active-site residue. Residues 73–74, 147–148, His158, Arg175, Asp177, 188–193, and Gln247 contribute to the NAD(+) site; these read DG, NE, and TGYSLS.

It belongs to the NAD kinase family. The cofactor is a divalent metal cation.

It localises to the cytoplasm. The catalysed reaction is NAD(+) + ATP = ADP + NADP(+) + H(+). Functionally, involved in the regulation of the intracellular balance of NAD and NADP, and is a key enzyme in the biosynthesis of NADP. Catalyzes specifically the phosphorylation on 2'-hydroxyl of the adenosine moiety of NAD to yield NADP. This chain is NAD kinase, found in Buchnera aphidicola subsp. Schizaphis graminum (strain Sg).